Here is a 179-residue protein sequence, read N- to C-terminus: Large ribosomal subunit protein uL5 (179 aa).

Belongs to the universal ribosomal protein uL5 family. In terms of assembly, part of the 50S ribosomal subunit; part of the 5S rRNA/L5/L18/L25 subcomplex. Contacts the 5S rRNA and the P site tRNA. Forms a bridge to the 30S subunit in the 70S ribosome.

In terms of biological role, this is one of the proteins that bind and probably mediate the attachment of the 5S RNA into the large ribosomal subunit, where it forms part of the central protuberance. In the 70S ribosome it contacts protein S13 of the 30S subunit (bridge B1b), connecting the 2 subunits; this bridge is implicated in subunit movement. Contacts the P site tRNA; the 5S rRNA and some of its associated proteins might help stabilize positioning of ribosome-bound tRNAs. The polypeptide is Large ribosomal subunit protein uL5 (Bacillus pumilus (strain SAFR-032)).